Here is an 832-residue protein sequence, read N- to C-terminus: Mechanosensitive cation channel TMEM63B (832 aa).

The Extracellular segment spans residues Met-1 to Gly-40. The helical transmembrane segment at Val-41–Val-65 threads the bilayer. The S-palmitoyl cysteine moiety is linked to residue Cys-51. Over Ala-66 to Gly-145 the chain is Cytoplasmic. The Mediates endoplasmic reticulum retention motif lies at Arg-86–Arg-88. A phosphoserine mark is found at Ser-111, Ser-113, Ser-114, and Ser-115. Cys-126 carries the S-palmitoyl cysteine lipid modification. A helical transmembrane segment spans residues Gly-146 to Phe-178. The Extracellular portion of the chain corresponds to Ser-179–Asn-202. The chain crosses the membrane as a helical span at residues Asn-203–Thr-227. At Ser-228 to Gly-427 the chain is on the cytoplasmic side. Positions Arg-231 to Arg-426 are intracellular linker IL2; confers mechanosensitivity. Residues Cys-382 and Cys-398 are each lipidated (S-palmitoyl cysteine). The chain crosses the membrane as a helical span at residues Phe-428–Thr-457. Residues Met-458–Asn-472 are Extracellular-facing. N-linked (GlcNAc...) asparagine glycosylation occurs at Asn-462. The chain crosses the membrane as a helical span at residues Pro-473–Glu-502. The Cytoplasmic portion of the chain corresponds to Ala-503–Thr-506. A helical membrane pass occupies residues Arg-507–Trp-543. Residues Leu-544 to Gly-566 lie on the Extracellular side of the membrane. A helical transmembrane segment spans residues Ala-567–Cys-599. Residues Ala-567–Cys-599 are gating helix. Topologically, residues Leu-600–Gln-619 are cytoplasmic. The chain crosses the membrane as a helical span at residues Phe-620–Ser-638. Topologically, residues Ile-639–Cys-641 are extracellular. Residues Pro-642–Ala-666 traverse the membrane as a helical segment. Residues Tyr-667–Asp-673 lie on the Cytoplasmic side of the membrane. Residues Lys-674–Arg-702 form a helical membrane-spanning segment. Residues Thr-703–Ala-707 are Extracellular-facing. The chain crosses the membrane as a helical span at residues Pro-708 to Val-728. Residues Cys-726 and Cys-729 are each lipidated (S-palmitoyl cysteine). Topologically, residues Cys-729 to Gln-832 are cytoplasmic. The disordered stretch occupies residues Glu-780 to Thr-814. Residues Pro-789 to Ser-801 are compositionally biased toward low complexity.

Belongs to the CSC1 (TC 1.A.17) family. As to quaternary structure, monomer. Interacts with SLC19A2; interaction is required for the phospholipid scramblase activity. Palmitoylation is required for localization to the plasma membrane and stability. In terms of processing, N-Glycosylated.

The protein localises to the cell membrane. Its subcellular location is the endoplasmic reticulum membrane. The protein resides in the lysosome membrane. It localises to the early endosome membrane. It carries out the reaction Ca(2+)(in) = Ca(2+)(out). It catalyses the reaction Mg(2+)(in) = Mg(2+)(out). The catalysed reaction is K(+)(in) = K(+)(out). The enzyme catalyses Na(+)(in) = Na(+)(out). It carries out the reaction Cs(+)(in) = Cs(+)(out). It catalyses the reaction a 1,2-diacyl-sn-glycero-3-phosphocholine(in) = a 1,2-diacyl-sn-glycero-3-phosphocholine(out). The catalysed reaction is a sphingomyelin(in) = a sphingomyelin(out). Its function is as follows. Mechanosensitive cation channel with low conductance and high activation threshold. Osmosensitive cation channel preferentially activated by hypotonic stress. Also acts as a phospholipid scramblase in response to changes in membrane structure: upon changes in membrane curvature and thickness, alters its conformation and translocates phospholipids, such as phosphatidylcholine and sphingomyelin, thereby controlling plasma membrane lipid distribution. Forms a heterodimer with SLC19A2, which mediates phospholipid scramblase activity following Ca(2+) stimulation. Expressed in excitatory neurons of the subfornical organ and functions as a thirst receptor that mediates neuronal response to hyperosmolality to drive thirst and drinking behavior. Facilitates intestinal motility by promoting proliferation of intestinal stem cells. Essential for the baby's first breath and respiration throughout life. Upon lung inflation conducts cation currents in alveolar type 1 and 2 cells triggering lamellar body exocytosis and surfactant secretion into airspace. Acts as an osmosensor in cochlear outer hair cells (OHCs) where it mediates calcium influx and regulatory volume decrease response. Required for the maintenance of OHC morphology, OHC survival and normal hearing. The chain is Mechanosensitive cation channel TMEM63B from Homo sapiens (Human).